A 138-amino-acid polypeptide reads, in one-letter code: Large ribosomal subunit protein mL43 (138 aa).

It belongs to the mitochondrion-specific ribosomal protein mL43 family. In terms of assembly, component of the mitochondrial large ribosomal subunit (mt-LSU). Mature N.crassa 74S mitochondrial ribosomes consist of a small (37S) and a large (54S) subunit. The 37S small subunit contains a 16S ribosomal RNA (16S mt-rRNA) and 32 different proteins. The 54S large subunit contains a 23S rRNA (23S mt-rRNA) and 42 different proteins.

The protein resides in the mitochondrion. Functionally, component of the mitochondrial ribosome (mitoribosome), a dedicated translation machinery responsible for the synthesis of mitochondrial genome-encoded proteins, including at least some of the essential transmembrane subunits of the mitochondrial respiratory chain. The mitoribosomes are attached to the mitochondrial inner membrane and translation products are cotranslationally integrated into the membrane. The protein is Large ribosomal subunit protein mL43 (mrpl51) of Neurospora crassa (strain ATCC 24698 / 74-OR23-1A / CBS 708.71 / DSM 1257 / FGSC 987).